We begin with the raw amino-acid sequence, 365 residues long: Ribosomal RNA large subunit methyltransferase M (365 aa).

Residues S188, 221-224, D240, D260, and D277 contribute to the S-adenosyl-L-methionine site; that span reads CPGG. K306 functions as the Proton acceptor in the catalytic mechanism.

It belongs to the class I-like SAM-binding methyltransferase superfamily. RNA methyltransferase RlmE family. RlmM subfamily. In terms of assembly, monomer.

It localises to the cytoplasm. It catalyses the reaction cytidine(2498) in 23S rRNA + S-adenosyl-L-methionine = 2'-O-methylcytidine(2498) in 23S rRNA + S-adenosyl-L-homocysteine + H(+). In terms of biological role, catalyzes the 2'-O-methylation at nucleotide C2498 in 23S rRNA. The protein is Ribosomal RNA large subunit methyltransferase M of Proteus mirabilis (strain HI4320).